Reading from the N-terminus, the 278-residue chain is Purine nucleoside phosphorylase YlmD (278 aa).

Residues histidine 87, cysteine 132, and histidine 149 each contribute to the Zn(2+) site.

The protein belongs to the purine nucleoside phosphorylase YfiH/LACC1 family. As to quaternary structure, homodimer. It depends on Cu(2+) as a cofactor. Requires Zn(2+) as cofactor.

It carries out the reaction adenosine + phosphate = alpha-D-ribose 1-phosphate + adenine. The enzyme catalyses S-methyl-5'-thioadenosine + phosphate = 5-(methylsulfanyl)-alpha-D-ribose 1-phosphate + adenine. It catalyses the reaction inosine + phosphate = alpha-D-ribose 1-phosphate + hypoxanthine. The catalysed reaction is adenosine + H2O + H(+) = inosine + NH4(+). Purine nucleoside enzyme that catalyzes the phosphorolysis of adenosine and inosine nucleosides, yielding D-ribose 1-phosphate and the respective free bases, adenine and hypoxanthine. Also catalyzes the phosphorolysis of S-methyl-5'-thioadenosine into adenine and S-methyl-5-thio-alpha-D-ribose 1-phosphate. Also has adenosine deaminase activity. This Bacillus subtilis (strain 168) protein is Purine nucleoside phosphorylase YlmD (ylmD).